We begin with the raw amino-acid sequence, 101 residues long: uncharacterized protein (101 aa).

Residues phenylalanine 13–phenylalanine 33 traverse the membrane as a helical segment.

It localises to the membrane. This is an uncharacterized protein from Schizosaccharomyces pombe (strain 972 / ATCC 24843) (Fission yeast).